Reading from the N-terminus, the 340-residue chain is Ferredoxin--NADP reductase (340 aa).

Residues Asp33, Gln41, Tyr46, Ala86, Phe120, Asp286, and Thr327 each contribute to the FAD site.

This sequence belongs to the ferredoxin--NADP reductase type 2 family. Homodimer. The cofactor is FAD.

The enzyme catalyses 2 reduced [2Fe-2S]-[ferredoxin] + NADP(+) + H(+) = 2 oxidized [2Fe-2S]-[ferredoxin] + NADPH. The polypeptide is Ferredoxin--NADP reductase (Rickettsia rickettsii (strain Sheila Smith)).